We begin with the raw amino-acid sequence, 851 residues long: Leucine--tRNA ligase (851 aa).

The short motif at 51–61 (PYPSGDLHMGH) is the 'HIGH' region element. Positions 615–619 (KMSKS) match the 'KMSKS' region motif. K618 lines the ATP pocket.

The protein belongs to the class-I aminoacyl-tRNA synthetase family.

The protein resides in the cytoplasm. The catalysed reaction is tRNA(Leu) + L-leucine + ATP = L-leucyl-tRNA(Leu) + AMP + diphosphate. The sequence is that of Leucine--tRNA ligase from Clavibacter michiganensis subsp. michiganensis (strain NCPPB 382).